The primary structure comprises 549 residues: Oxygen-dependent choline dehydrogenase (549 aa).

FAD is bound at residue aspartate 4 to glutamate 33. Histidine 465 (proton acceptor) is an active-site residue.

This sequence belongs to the GMC oxidoreductase family. Requires FAD as cofactor.

It carries out the reaction choline + A = betaine aldehyde + AH2. The enzyme catalyses betaine aldehyde + NAD(+) + H2O = glycine betaine + NADH + 2 H(+). It participates in amine and polyamine biosynthesis; betaine biosynthesis via choline pathway; betaine aldehyde from choline (cytochrome c reductase route): step 1/1. Its function is as follows. Involved in the biosynthesis of the osmoprotectant glycine betaine. Catalyzes the oxidation of choline to betaine aldehyde and betaine aldehyde to glycine betaine at the same rate. The polypeptide is Oxygen-dependent choline dehydrogenase (Sinorhizobium fredii (strain NBRC 101917 / NGR234)).